Consider the following 3649-residue polypeptide: N-(5-amino-5-carboxypentanoyl)-L-cysteinyl-D-valine synthase (3649 aa).

Residues 401–861 (SRDRAYVTYT…LAGHLESQGH (461 aa)) are domain 1 (adipate-activating). Carrier domains follow at residues 783-860 (APLL…ESQG), 1859-1936 (APVS…QAAA), and 2909-2984 (APRD…LSGL). O-(pantetheine 4'-phosphoryl)serine is present on residues S820, S1896, and S2944. The interval 1014–1937 (HHIILDGWSL…QAEHIQAAAL (924 aa)) is domain 2 (cysteine-activating). The domain 3 (valine-activating) stretch occupies residues 2079-2985 (HHSCFDGWSW…FVDNVLSGLA (907 aa)). S3502 (for thioesterase activity) is an active-site residue.

This sequence belongs to the ATP-dependent AMP-binding enzyme family. Requires pantetheine 4'-phosphate as cofactor.

It carries out the reaction L-2-aminoadipate + L-valine + L-cysteine + 3 ATP + H2O = N-[(5S)-5-amino-5-carboxypentanoyl]-L-cysteinyl-D-valine + 3 AMP + 3 diphosphate + 3 H(+). It participates in antibiotic biosynthesis; penicillin G biosynthesis; penicillin G from L-alpha-aminoadipate and L-cysteine and L-valine: step 1/3. Each of the constituent amino acids of the tripeptide acv are activated as aminoacyl-adenylates with peptide bonds formed through the participation of amino acid thioester intermediates. This is N-(5-amino-5-carboxypentanoyl)-L-cysteinyl-D-valine synthase (pcbAB) from Amycolatopsis lactamdurans (Nocardia lactamdurans).